A 226-amino-acid chain; its full sequence is Putative 5'-nucleotidase alr3139 (226 aa).

A divalent metal cation-binding residues include Asp-8, Asp-9, Ser-38, and Asn-89.

Belongs to the SurE nucleotidase family. A divalent metal cation is required as a cofactor.

It localises to the cytoplasm. The enzyme catalyses a ribonucleoside 5'-phosphate + H2O = a ribonucleoside + phosphate. Functionally, nucleotidase that shows phosphatase activity on nucleoside 5'-monophosphates. The protein is Putative 5'-nucleotidase alr3139 of Nostoc sp. (strain PCC 7120 / SAG 25.82 / UTEX 2576).